The following is a 114-amino-acid chain: MGVMEILVSTLEAVPGYRVAQVLGVVKGSTVRSKHLGKDLLAGLRTLVGGELPEYTEMLQEAREVAEARMLEEARRLGAHAVLGVRYATASVMQGAAEILVYGTAVRLEPAREV.

This sequence belongs to the UPF0145 family.

This chain is UPF0145 protein TTHA1944, found in Thermus thermophilus (strain ATCC 27634 / DSM 579 / HB8).